Reading from the N-terminus, the 758-residue chain is Protein hunchback (758 aa).

Disordered stretches follow at residues 30–51 (EPGH…PIPS) and 172–214 (EKLQ…EDMK). A compositionally biased stretch (polar residues) spans 39-51 (SVASSPRQSPIPS). Thr178 carries the post-translational modification Phosphothreonine. Residues Ser188, Ser207, Ser209, and Ser210 each carry the phosphoserine modification. The span at 198–214 (EPEKEHDQMSNSSEDMK) shows a compositional bias: basic and acidic residues. 4 consecutive C2H2-type zinc fingers follow at residues 240–262 (YKCK…TRTH), 269–291 (LQCP…IRKH), 297–319 (FQCD…RKSH), and 325–349 (YRCA…KYGH). Disordered stretches follow at residues 365–416 (LVID…PVAT) and 513–536 (QLQQ…YERK). 2 stretches are compositionally biased toward low complexity: residues 398–415 (VAAV…QPVA) and 513–522 (QLQQQNQQQS). Residues 523-532 (DNEEEEQDDE) are compositionally biased toward acidic residues. Residues Ser537 and Ser540 each carry the phosphoserine modification. Positions 603 to 695 (MTSPEQLKVP…TTSAVAAPPS (93 aa)) are disordered. Positions 652 to 695 (ANTSASSTASSSGNSSNASSNSNGNSSSNSSSNGTTSAVAAPPS) are enriched in low complexity. 2 C2H2-type zinc fingers span residues 705–727 (YECK…MGYH) and 733–757 (FKCN…RNAH).

The protein belongs to the hunchback C2H2-type zinc-finger protein family. As to expression, in embryo, expression of maternal transcript is highest in anterior region. Zygotic transcript is expressed in anterior region until the beginning of gastrulation and in posterior region until early gastrulation. After this, it is expressed in developing nervous system.

It is found in the nucleus. Functionally, gap class segmentation protein that controls development of head structures. The chain is Protein hunchback from Drosophila melanogaster (Fruit fly).